The sequence spans 292 residues: Tetratricopeptide repeat protein 1 (292 aa).

The interval 23–125 (TQEAECAGPP…STRLKEEGNE (103 aa)) is disordered. Basic and acidic residues-rich tracts occupy residues 45–55 (LLRDDEAHLQE) and 75–85 (GADKVENKSNE). Phosphoserine is present on residues serine 83 and serine 90. Positions 99–125 (ELEKNMSDEEKQKRREESTRLKEEGNE) are enriched in basic and acidic residues. TPR repeat units follow at residues 116–149 (STRLKEEGNEQFKKGDYIEAESSYSRALEMCPSC), 155–188 (SILFSNRAAARMKQDKKEMAINDCSKAIQLNPSY), and 189–222 (IRAILRRAELYEKTDKLDEALEDYKSILEKDPSI).

Interacts with the GAP domain of NF1. Interacts (via TPR repeats) with HSP90AA1 and HSPA8.

In Homo sapiens (Human), this protein is Tetratricopeptide repeat protein 1 (TTC1).